The primary structure comprises 300 residues: Ribosomal protein L11 methyltransferase (300 aa).

4 residues coordinate S-adenosyl-L-methionine: T152, G173, D195, and N234.

The protein belongs to the methyltransferase superfamily. PrmA family.

It is found in the cytoplasm. The catalysed reaction is L-lysyl-[protein] + 3 S-adenosyl-L-methionine = N(6),N(6),N(6)-trimethyl-L-lysyl-[protein] + 3 S-adenosyl-L-homocysteine + 3 H(+). Functionally, methylates ribosomal protein L11. This Cupriavidus necator (strain ATCC 17699 / DSM 428 / KCTC 22496 / NCIMB 10442 / H16 / Stanier 337) (Ralstonia eutropha) protein is Ribosomal protein L11 methyltransferase.